Consider the following 467-residue polypeptide: Glutamate--tRNA ligase (467 aa).

The 'HIGH' region signature appears at 14 to 24; it reads PSPTGFLHLGG. Residues 124–134 are compositionally biased toward basic and acidic residues; the sequence is PRYDGTWRPEP. The interval 124 to 156 is disordered; the sequence is PRYDGTWRPEPGKTLPPVPAGRKPVVRFKNPQD. Residues 246–250 carry the 'KMSKS' region motif; sequence KLSKR. Lys-249 provides a ligand contact to ATP.

The protein belongs to the class-I aminoacyl-tRNA synthetase family. Glutamate--tRNA ligase type 1 subfamily. Monomer.

The protein resides in the cytoplasm. It carries out the reaction tRNA(Glu) + L-glutamate + ATP = L-glutamyl-tRNA(Glu) + AMP + diphosphate. Functionally, catalyzes the attachment of glutamate to tRNA(Glu) in a two-step reaction: glutamate is first activated by ATP to form Glu-AMP and then transferred to the acceptor end of tRNA(Glu). This Bordetella petrii (strain ATCC BAA-461 / DSM 12804 / CCUG 43448) protein is Glutamate--tRNA ligase.